Reading from the N-terminus, the 115-residue chain is Somatostatin-2 (115 aa).

A signal peptide spans 1–18 (MKVCRIHCALALLGLALA). A propeptide spanning residues 19–87 (ICSQGAASQP…KEDLRVELER (69 aa)) is cleaved from the precursor. Residues Cys-104 and Cys-115 are joined by a disulfide bond.

This sequence belongs to the somatostatin family.

The protein localises to the secreted. Its function is as follows. Somatostatin inhibits the release of somatotropin. The sequence is that of Somatostatin-2 (sst2) from Oncorhynchus mykiss (Rainbow trout).